We begin with the raw amino-acid sequence, 162 residues long: uncharacterized protein (162 aa).

Positions 78–154 (KNLVVVDIGA…KAIKNLHYVG (77 aa)) constitute a PUA domain.

This is an uncharacterized protein from Methanocaldococcus jannaschii (strain ATCC 43067 / DSM 2661 / JAL-1 / JCM 10045 / NBRC 100440) (Methanococcus jannaschii).